The chain runs to 314 residues: MALVAGSAAYQVLRGVTGTFPTQSATLLARAPALCAHTMNRRRMSSSQQTDHLERTANTFRQEIISPAKVCGITNESATVKRVRLAIANREFTFKAGQWVDFFIPGVPKVGGFSICSSPGLLETEGVLELAVKYNLHPPAHWIHSQCALGSEVAIRVGGEFCFDPQPSDLPLDLVLIAGGVGINPLFSILLHVADLHKTREITGRGFQMGNVKLYYCAKNTGELLFKRNILDLVNSFPGKVTCSFHVTQQSSPICRELQPFITEGRITEKDLASYVSTDQLCYICGPPPMIESMCKQLQSLHLPKERILFEKWW.

A signal peptide spans 1–18 (MALVAGSAAYQVLRGVTG). An FAD-binding FR-type domain is found at 63 to 166 (EIISPAKVCG…VGGEFCFDPQ (104 aa)). Position 180–185 (180–185 (GVGINP)) interacts with NAD(+).

This Xenopus laevis (African clawed frog) protein is Oxidoreductase NAD-binding domain-containing protein 1 (oxnad1).